The following is a 173-amino-acid chain: Large ribosomal subunit protein uL15 (173 aa).

Positions 1–11 (MKLNEIRDNQG) are enriched in basic and acidic residues. Positions 1–50 (MKLNEIRDNQGARKSRVRVGRGIGSGLGKTGGRGQKGQKSRSGVSINGFE) are disordered. The segment covering 21-35 (RGIGSGLGKTGGRGQ) has biased composition (gly residues).

This sequence belongs to the universal ribosomal protein uL15 family. In terms of assembly, part of the 50S ribosomal subunit.

Its function is as follows. Binds to the 23S rRNA. The protein is Large ribosomal subunit protein uL15 of Rhizorhabdus wittichii (strain DSM 6014 / CCUG 31198 / JCM 15750 / NBRC 105917 / EY 4224 / RW1) (Sphingomonas wittichii).